The primary structure comprises 329 residues: Malate dehydrogenase (329 aa).

Residue Gly12–Gly18 coordinates NAD(+). The substrate site is built by Arg93 and Arg99. Residues Asn106, Gln113, and Val130–Asn132 each bind NAD(+). Substrate contacts are provided by Asn132 and Arg163. His188 (proton acceptor) is an active-site residue.

This sequence belongs to the LDH/MDH superfamily. MDH type 2 family.

The enzyme catalyses (S)-malate + NAD(+) = oxaloacetate + NADH + H(+). Its function is as follows. Catalyzes the reversible oxidation of malate to oxaloacetate. This chain is Malate dehydrogenase, found in Frankia casuarinae (strain DSM 45818 / CECT 9043 / HFP020203 / CcI3).